Here is a 212-residue protein sequence, read N- to C-terminus: ATP-dependent Clp protease proteolytic subunit (212 aa).

Catalysis depends on S114, which acts as the Nucleophile. H139 is a catalytic residue.

This sequence belongs to the peptidase S14 family. Fourteen ClpP subunits assemble into 2 heptameric rings which stack back to back to give a disk-like structure with a central cavity, resembling the structure of eukaryotic proteasomes.

It is found in the cytoplasm. The catalysed reaction is Hydrolysis of proteins to small peptides in the presence of ATP and magnesium. alpha-casein is the usual test substrate. In the absence of ATP, only oligopeptides shorter than five residues are hydrolyzed (such as succinyl-Leu-Tyr-|-NHMec, and Leu-Tyr-Leu-|-Tyr-Trp, in which cleavage of the -Tyr-|-Leu- and -Tyr-|-Trp bonds also occurs).. Functionally, cleaves peptides in various proteins in a process that requires ATP hydrolysis. Has a chymotrypsin-like activity. Plays a major role in the degradation of misfolded proteins. The sequence is that of ATP-dependent Clp protease proteolytic subunit from Aromatoleum aromaticum (strain DSM 19018 / LMG 30748 / EbN1) (Azoarcus sp. (strain EbN1)).